We begin with the raw amino-acid sequence, 416 residues long: Tyrosine-protein phosphatase non-receptor type 2 (416 aa).

The region spanning 5–275 (IEREFEELDA…RFSYMAIIEG (271 aa)) is the Tyrosine-protein phosphatase domain. The residue at position 22 (Y22) is a Phosphotyrosine. The residue at position 52 (S52) is a Phosphoserine. Position 68 is a phosphotyrosine (Y68). Residues D182, 216-222 (CSAGIGR), and Q260 contribute to the substrate site. C216 functions as the Phosphocysteine intermediate in the catalytic mechanism. Residue C216 is modified to S-nitrosocysteine. A phosphoserine mark is found at S293, S298, S304, S320, and S339. The endoplasmic reticulum location stretch occupies residues 341 to 410 (ESILRKRIRE…WTLLFQLNVL (70 aa)). The interval 371–410 (ERKRKRWLYWQPILTKMGFVSVILVGALVGWTLLFQLNVL) is may mediate interaction with STX17.

This sequence belongs to the protein-tyrosine phosphatase family. Non-receptor class 1 subfamily. As to quaternary structure, interacts with RMDN3. Interacts with TMED9. Interacts with STX17; dephosphorylates STX17. Interacts with ITGA1 (via cytoplasmic domain); activates the phosphatase activity towards EGFR. Interacts with TRAF2; probably involved in tumor necrosis factor-mediated signaling. Interacts with MET. Interacts with FAM220A and STAT3; interaction with FAM220A promotes interaction of PTPN2 with transcriptional activator STAT3, leading to dephosphorylation of STAT3 by PTPN2 and negative regulation of STAT3 transcriptional activator activity. Post-translationally, specifically phosphorylated in a cell cycle-dependent manner by cyclin-dependent kinases CDK1 and CDK2. Probably activated through phosphorylation by PKR. As to expression, does not show tissue- or cell-type specificity although levels of transcription show variability. Macrophages showed higher levels of expression than lymphocytes.

The protein resides in the cytoplasm. It localises to the endoplasmic reticulum-Golgi intermediate compartment. Its subcellular location is the endoplasmic reticulum. The protein localises to the nucleus membrane. It is found in the nucleus. The protein resides in the cell membrane. It catalyses the reaction O-phospho-L-tyrosyl-[protein] + H2O = L-tyrosyl-[protein] + phosphate. Its function is as follows. Non-receptor type tyrosine-specific phosphatase that dephosphorylates receptor protein tyrosine kinases including INSR, EGFR, CSF1R, PDGFR. Also dephosphorylates non-receptor protein tyrosine kinases like JAK1, JAK2, JAK3, Src family kinases, STAT1, STAT3 and STAT6 either in the nucleus or the cytoplasm. Negatively regulates numerous signaling pathways and biological processes like hematopoiesis, inflammatory response, cell proliferation and differentiation, and glucose homeostasis. Plays a multifaceted and important role in the development of the immune system. Functions in T-cell receptor signaling through dephosphorylation of FYN and LCK to control T-cells differentiation and activation. Dephosphorylates CSF1R, negatively regulating its downstream signaling and macrophage differentiation. Negatively regulates cytokine (IL2/interleukin-2 and interferon)-mediated signaling through dephosphorylation of the cytoplasmic kinases JAK1, JAK3 and their substrate STAT1, that propagate signaling downstream of the cytokine receptors. Also regulates the IL6/interleukin-6 and IL4/interleukin-4 cytokine signaling through dephosphorylation of STAT3 and STAT6 respectively. In addition to the immune system, it is involved in anchorage-dependent, negative regulation of EGF-stimulated cell growth. Activated by the integrin ITGA1/ITGB1, it dephosphorylates EGFR and negatively regulates EGF signaling. Dephosphorylates PDGFRB and negatively regulates platelet-derived growth factor receptor-beta signaling pathway and therefore cell proliferation. Negatively regulates tumor necrosis factor-mediated signaling downstream via MAPK through SRC dephosphorylation. May also regulate the hepatocyte growth factor receptor signaling pathway through dephosphorylation of the hepatocyte growth factor receptor MET. Also plays an important role in glucose homeostasis. For instance, negatively regulates the insulin receptor signaling pathway through the dephosphorylation of INSR and control gluconeogenesis and liver glucose production through negative regulation of the IL6 signaling pathways. May also bind DNA. The sequence is that of Tyrosine-protein phosphatase non-receptor type 2 (Ptpn2) from Rattus norvegicus (Rat).